We begin with the raw amino-acid sequence, 370 residues long: tRNA-specific 2-thiouridylase MnmA (370 aa).

Residues 14 to 21 and Met40 each bind ATP; that span reads GMSGGVDS. The interaction with target base in tRNA stretch occupies residues 100 to 102; it reads NPD. The active-site Nucleophile is the Cys105. Residues Cys105 and Cys205 are joined by a disulfide bond. Gly129 provides a ligand contact to ATP. Positions 155-157 are interaction with tRNA; it reads KDQ. Cys205 (cysteine persulfide intermediate) is an active-site residue. The interaction with tRNA stretch occupies residues 321-322; the sequence is RY.

Belongs to the MnmA/TRMU family.

Its subcellular location is the cytoplasm. The enzyme catalyses S-sulfanyl-L-cysteinyl-[protein] + uridine(34) in tRNA + AH2 + ATP = 2-thiouridine(34) in tRNA + L-cysteinyl-[protein] + A + AMP + diphosphate + H(+). Functionally, catalyzes the 2-thiolation of uridine at the wobble position (U34) of tRNA, leading to the formation of s(2)U34. This is tRNA-specific 2-thiouridylase MnmA from Bordetella avium (strain 197N).